A 1399-amino-acid polypeptide reads, in one-letter code: DNA-directed RNA polymerase subunit beta' (1399 aa).

Cysteine 70, cysteine 72, cysteine 85, and cysteine 88 together coordinate Zn(2+). Residues aspartate 460, aspartate 462, and aspartate 464 each coordinate Mg(2+). Zn(2+) is bound by residues cysteine 814, cysteine 888, cysteine 895, and cysteine 898.

Belongs to the RNA polymerase beta' chain family. In terms of assembly, the RNAP catalytic core consists of 2 alpha, 1 beta, 1 beta' and 1 omega subunit. When a sigma factor is associated with the core the holoenzyme is formed, which can initiate transcription. Mg(2+) is required as a cofactor. The cofactor is Zn(2+).

The enzyme catalyses RNA(n) + a ribonucleoside 5'-triphosphate = RNA(n+1) + diphosphate. Its function is as follows. DNA-dependent RNA polymerase catalyzes the transcription of DNA into RNA using the four ribonucleoside triphosphates as substrates. The polypeptide is DNA-directed RNA polymerase subunit beta' (Pseudomonas savastanoi pv. phaseolicola (strain 1448A / Race 6) (Pseudomonas syringae pv. phaseolicola (strain 1448A / Race 6))).